A 768-amino-acid chain; its full sequence is Levansucrase (768 aa).

Positions 1 to 36 are cleaved as a signal peptide; the sequence is MLENKKHKKMSLSGKSLLMGTLSTAAIVLSASTVNA. Composition is skewed to polar residues over residues 57–68, 80–99, 106–134, and 143–153; these read SASVNKNDNSGL, TETN…SQVN, SSTQ…QDSD, and NNSQGQSSTSS. The disordered stretch occupies residues 57 to 158; that stretch reads SASVNKNDNS…SSTSSEKTEL (102 aa). Sucrose is bound by residues Trp250, Asp251, and Ser320. The active-site Nucleophile is Asp251. Asp398 is a binding site for Ca(2+). Sucrose contacts are provided by Arg403 and Asp404. Gln429, Asn468, and Asp502 together coordinate Ca(2+). Glu503 lines the sucrose pocket. Glu505 (proton donor/acceptor) is an active-site residue. Arg523 provides a ligand contact to sucrose. A disordered region spans residues 688–736; the sequence is HQPVTPNVPTTPEKPENPTTPNTPDTPRTPEVPTTPVKKTTQSELPKAG. Residues 691–727 are compositionally biased toward low complexity; the sequence is VTPNVPTTPEKPENPTTPNTPDTPRTPEVPTTPVKKT. The LPXTG sorting signal motif lies at 732–736; sequence LPKAG. Ala735 is subject to Pentaglycyl murein peptidoglycan amidated alanine. Positions 736-768 are cleaved as a propeptide — removed by sortase; that stretch reads GAKDGIAATILGAISSMLGVIGLAGISKRKRNN.

The protein belongs to the glycosyl hydrolase 68 family.

Its subcellular location is the secreted. The protein resides in the cell wall. It is found in the cell surface. It carries out the reaction [6)-beta-D-fructofuranosyl-(2-&gt;](n) alpha-D-glucopyranoside + sucrose = [6)-beta-D-fructofuranosyl-(2-&gt;](n+1) alpha-D-glucopyranoside + D-glucose. With respect to regulation, calcium ions are required for optimal activity, but do not seem to be essential since addition of EDTA causes only a 48% drop in activity. Ca(2+) may play an important structural role and promote stability of levansucrase. Functionally, fructosyltransferase that catalyzes the polymerization of the fructose moiety of sucrose to produce levan polymer and the fructo-oligosaccharide (FOS) 1-kestose. Is also able to convert raffinose into a fructan polymer and a single oligosaccharide (most likely Gal-Glc-Frc-Frc) in vitro; however, L.gasseri strain DSM 20077 is unable to ferment raffinose. Also displays sucrose hydrolase activity. The chain is Levansucrase from Lactobacillus gasseri.